An 890-amino-acid chain; its full sequence is MLLNMNLQELKQKYNYDVATKMMQQYLDIKFAHLDCLLLFRMGDFYEMFYEDAILASNVLGIALTKRGKNGEEEIAMCGVPYHALENYLTKLIEANYKVAICDQLETPEEAKNRGGYKAVVTRDVTRIITPGTIIEENLIASAEPNYLASLVIPKNKETASLCYVDLSTSEIVVVNVPETEILNELARLKPREILLSENLRSSNLADSIFKQLNFRITYQVDSFFAINKCEKIILDFYKMKDIKGIGEISSSQICAIGSVLEYLSLTQKQNIPHLPIPRIIKFHSYMTIDFSTRRNLEIVTNSQGGSQGSLLSTLNHTVTKQGGRLLYNFLSSPLTNIAKINHRLNITEFFYSNLEIVKKIRELLKKTSDIERCLTRITMNRSSGRDLLSIKYTLETATIIKGVFFDAYGFNLPDFIEKIIKPLSGDAELYNLIDETIREDAPNNLNDGGIIKHEYHPKVAQLHDLINNGKLYIEKLKDQYRKETGIDSLKISHNNVIGLFIDITAKNVNKILDPKFIHRQTTVNHVRYTTAELQKLESELVNAKTLVISLEKELYADICSQVIEKASYLRMLASSLSGLDVFCNFAYIADEYDYVKPEFTDDLSFDIVKGRHPVVEKALQRESKSFVYNDCHLSELERIWLITGPNMAGKSTFLRQNAIIAIIAQIGSFVPAKSAKIGVVDKIFSRIGAADDLIKGQSTFMAEMLETSAILAQSTKNSLIILDEVGRGTSTYDGVSIAWSVLEYIHDKLKCRCLFATHYHELTVMSNFLPALQNYTIAIEESGKDILFLHNIISGAADRSYGLHVAALAGLPASVINRAEQILLKFEKTSTGKGKNILSTESNNLSLFYLEPNKTTISSKLDKKFSTIDPDKLSPKEALELIYELKKLV.

645 to 652 (GPNMAGKS) contacts ATP.

It belongs to the DNA mismatch repair MutS family.

This protein is involved in the repair of mismatches in DNA. It is possible that it carries out the mismatch recognition step. This protein has a weak ATPase activity. The polypeptide is DNA mismatch repair protein MutS (Rickettsia conorii (strain ATCC VR-613 / Malish 7)).